The primary structure comprises 101 residues: Large ribosomal subunit protein bL9m (101 aa).

The N-terminal 32 residues, 1–32 (MSIMKPTTRFFRFNSLELAVSPFQRIYGQLRF), are a transit peptide targeting the mitochondrion.

Belongs to the bacterial ribosomal protein bL9 family. As to quaternary structure, component of the mitochondrial large ribosomal subunit (mt-LSU). Mature yeast 74S mitochondrial ribosomes consist of a small (37S) and a large (54S) subunit. The 37S small subunit contains a 15S ribosomal RNA (15S mt-rRNA) and at least 32 different proteins. The 54S large subunit contains a 21S rRNA (21S mt-rRNA) and at least 45 different proteins.

It is found in the mitochondrion. Its function is as follows. Component of the mitochondrial ribosome (mitoribosome), a dedicated translation machinery responsible for the synthesis of mitochondrial genome-encoded proteins, including at least some of the essential transmembrane subunits of the mitochondrial respiratory chain. The mitoribosomes are attached to the mitochondrial inner membrane and translation products are cotranslationally integrated into the membrane. The sequence is that of Large ribosomal subunit protein bL9m from Schizosaccharomyces pombe (strain 972 / ATCC 24843) (Fission yeast).